Reading from the N-terminus, the 448-residue chain is Porin AaxA (448 aa).

Positions 1-24 are cleaved as a signal peptide; it reads MASFRSSLLSALCAYGMMVMPAYA.

Belongs to the OprB family.

The protein localises to the cell outer membrane. Facilitates L-arginine uptake, as part of the AaxABC system. The arginine uptake by the bacterium in the macrophage may be a virulence factor against the host innate immune response. In Chlamydia abortus (strain DSM 27085 / S26/3) (Chlamydophila abortus), this protein is Porin AaxA (aaxA).